Consider the following 326-residue polypeptide: tRNA dimethylallyltransferase (326 aa).

18–25 (GPTASGKS) serves as a coordination point for ATP. 20–25 (TASGKS) lines the substrate pocket. Interaction with substrate tRNA stretches follow at residues 43 to 46 (DSMQ) and 167 to 171 (QRIAR).

The protein belongs to the IPP transferase family. As to quaternary structure, monomer. Mg(2+) serves as cofactor.

The catalysed reaction is adenosine(37) in tRNA + dimethylallyl diphosphate = N(6)-dimethylallyladenosine(37) in tRNA + diphosphate. Functionally, catalyzes the transfer of a dimethylallyl group onto the adenine at position 37 in tRNAs that read codons beginning with uridine, leading to the formation of N6-(dimethylallyl)adenosine (i(6)A). This chain is tRNA dimethylallyltransferase, found in Rhodospirillum rubrum (strain ATCC 11170 / ATH 1.1.1 / DSM 467 / LMG 4362 / NCIMB 8255 / S1).